Here is a 451-residue protein sequence, read N- to C-terminus: Phosphoglucosamine mutase (451 aa).

The Phosphoserine intermediate role is filled by serine 107. Serine 107, aspartate 246, aspartate 248, and aspartate 250 together coordinate Mg(2+). Serine 107 is subject to Phosphoserine.

Belongs to the phosphohexose mutase family. The cofactor is Mg(2+). In terms of processing, activated by phosphorylation.

The catalysed reaction is alpha-D-glucosamine 1-phosphate = D-glucosamine 6-phosphate. In terms of biological role, catalyzes the conversion of glucosamine-6-phosphate to glucosamine-1-phosphate. The polypeptide is Phosphoglucosamine mutase (Burkholderia ambifaria (strain MC40-6)).